Consider the following 555-residue polypeptide: Glutamine--tRNA ligase (555 aa).

The 'HIGH' region signature appears at 34 to 44 (PEPNGYLHIGH). Residues 35–37 (EPN) and 41–47 (HIGHAKS) each bind ATP. Positions 67 and 212 each coordinate L-glutamine. Residues Thr231, 261–262 (RL), and 269–271 (MSK) contribute to the ATP site. The short motif at 268-272 (IMSKR) is the 'KMSKS' region element.

The protein belongs to the class-I aminoacyl-tRNA synthetase family. In terms of assembly, monomer.

The protein localises to the cytoplasm. It catalyses the reaction tRNA(Gln) + L-glutamine + ATP = L-glutaminyl-tRNA(Gln) + AMP + diphosphate. In Yersinia pseudotuberculosis serotype O:1b (strain IP 31758), this protein is Glutamine--tRNA ligase.